Reading from the N-terminus, the 451-residue chain is Sex peptide receptor-related protein 2 (451 aa).

Residues 1–63 lie on the Extracellular side of the membrane; the sequence is MNYEVYCGNA…DNLEIVVYGQ (63 aa). A glycan (N-linked (GlcNAc...) asparagine) is linked at N15. A helical transmembrane segment spans residues 64–84; it reads IFPILVLFAVFANAAVALVLS. Over 85–97 the chain is Cytoplasmic; the sequence is KKHMITPTNVVLK. A helical membrane pass occupies residues 98–118; sequence YMAIAELLVGLVPLPWTLFFF. The Extracellular portion of the chain corresponds to 119 to 140; the sequence is SMGNIKETHRLELWWCYLQKYS. A disulfide bridge links C134 with C225. A helical transmembrane segment spans residues 141 to 161; it reads MDAFPPVFHMIAMWLTVLLAA. Residues 162–183 lie on the Cytoplasmic side of the membrane; sequence QRYVSISHPLHSRSACNVKNVR. A helical membrane pass occupies residues 184 to 204; the sequence is LATMIITVTSFLCGLPKSFDY. Residues 205–251 lie on the Extracellular side of the membrane; sequence EYETVHGWIYSHGNWTYASSCVMMPTAILTNMGQTVYFNIYFWTRAL. Residue N218 is glycosylated (N-linked (GlcNAc...) asparagine). A helical transmembrane segment spans residues 252–272; that stretch reads GFIILPSFLLVLLNGLLIKGI. At 273–301 the chain is on the cytoplasmic side; it reads RRAQRRKLRLLREKRSEEAARQRDSNSTS. Residues 302-322 traverse the membrane as a helical segment; that stretch reads LMLVAIVSIFLIVNLPQAIFM. Topologically, residues 323–334 are extracellular; sequence GLLCVCETFTIK. The chain crosses the membrane as a helical span at residues 335-355; the sequence is IPILEGTFPAVFLIASNMIVI. Residues 356 to 451 lie on the Cytoplasmic side of the membrane; the sequence is ATYPINFGIY…TQFTTMDRSD (96 aa).

It belongs to the G-protein coupled receptor 1 family. As to expression, expressed in head neurons including the ASE sensory neurons and the ASI and AWB chemosensory neurons, the midbody neurons SDQ, and motor neurons in the tail.

It localises to the cell membrane. G-protein coupled receptor for the neuropeptide like protein nlp-38. Plays a role in several types of aversive gustatory associative learning including gustatory plasticity and salt avoidance learning. Its role in salt avoidance learning may be through activation of the transcription factor crh-1/CREB and de novo transcription and translation, which in turn promotes the formation of long-term memory. This Caenorhabditis elegans protein is Sex peptide receptor-related protein 2.